The following is a 238-amino-acid chain: Ribonuclease 3 (238 aa).

The 131-residue stretch at 4–134 (PRQALLDAFG…LLGAIYLHHG (131 aa)) folds into the RNase III domain. Residue Glu44 coordinates Mg(2+). Asp48 is an active-site residue. Mg(2+) contacts are provided by Asp120 and Glu123. Glu123 is a catalytic residue. A DRBM domain is found at 161-229 (DWKTSLQELT…ASAAWKALDV (69 aa)).

The protein belongs to the ribonuclease III family. In terms of assembly, homodimer. Requires Mg(2+) as cofactor.

It is found in the cytoplasm. The catalysed reaction is Endonucleolytic cleavage to 5'-phosphomonoester.. Its function is as follows. Digests double-stranded RNA. Involved in the processing of primary rRNA transcript to yield the immediate precursors to the large and small rRNAs (23S and 16S). Processes some mRNAs, and tRNAs when they are encoded in the rRNA operon. Processes pre-crRNA and tracrRNA of type II CRISPR loci if present in the organism. The chain is Ribonuclease 3 from Mycobacterium leprae (strain TN).